The chain runs to 125 residues: Calcitonin gene-related peptide 1 (125 aa).

The N-terminal stretch at 1-25 is a signal peptide; the sequence is MVMLKISSFLAVYALVVCQMDSFQA. Residues 26–77 constitute a propeptide that is removed on maturation; the sequence is APVRPGLESITDRVTLSDYEARRLLNALVKDFIQMTAEELEQASEGNSVTAQ. A disulfide bond links cysteine 81 and cysteine 86. The residue at position 116 (phenylalanine 116) is a Phenylalanine amide. Positions 122–125 are excised as a propeptide; that stretch reads SVQI.

Belongs to the calcitonin family.

The protein resides in the secreted. In terms of biological role, CGRP1/CALCA is a peptide hormone that induces vasodilation mediated by the CALCRL-RAMP1 receptor complex. Dilates a variety of vessels including the coronary, cerebral and systemic vasculature. Its abundance in the CNS also points toward a neurotransmitter or neuromodulator role. It also elevates platelet cAMP. CGRP1 can also bind and activate CALCR-RAMP1 (AMYR1) receptor complex. This Gallus gallus (Chicken) protein is Calcitonin gene-related peptide 1 (CALCA).